The primary structure comprises 607 residues: Thymidine kinase (607 aa).

Disordered regions lie at residues 1 to 160 (MAGF…ADST) and 180 to 215 (DDKSDCESEDESNFRRPSSHSALKQKNGGKGKPSGL). Residues 17–32 (KCQEDESPENERHENF) show a composition bias toward basic and acidic residues. Polar residues-rich tracts occupy residues 88–106 (AAVTSNTGNSPGSRHTSCP), 148–160 (RKTSCTEGGADST), and 194–203 (RRPSSHSALK). 291–298 (GAPGVGKT) is an ATP binding site. Glu317 serves as the catalytic Proton acceptor. A substrate-binding site is contributed by Gln355. Arg445 contributes to the ATP binding site. Arg451 serves as a coordination point for substrate.

This sequence belongs to the herpesviridae thymidine kinase family. In terms of assembly, homodimer.

The protein resides in the virion tegument. It is found in the host nucleus. The catalysed reaction is thymidine + ATP = dTMP + ADP + H(+). Functionally, catalyzes the transfer of the gamma-phospho group of ATP to thymidine to generate dTMP in the salvage pathway of pyrimidine synthesis. The dTMP serves as a substrate for DNA polymerase during viral DNA replication. Allows the virus to be reactivated and to grow in non-proliferative cells lacking a high concentration of phosphorylated nucleic acid precursors. This Homo sapiens (Human) protein is Thymidine kinase.